The primary structure comprises 343 residues: Aspartate carbamoyltransferase catalytic subunit (343 aa).

2 residues coordinate carbamoyl phosphate: R91 and T92. K119 contributes to the L-aspartate binding site. Carbamoyl phosphate is bound by residues R141, H171, and Q174. Positions 204 and 259 each coordinate L-aspartate. Carbamoyl phosphate-binding residues include G300 and P301.

The protein belongs to the aspartate/ornithine carbamoyltransferase superfamily. ATCase family. Heterododecamer (2C3:3R2) of six catalytic PyrB chains organized as two trimers (C3), and six regulatory PyrI chains organized as three dimers (R2).

The catalysed reaction is carbamoyl phosphate + L-aspartate = N-carbamoyl-L-aspartate + phosphate + H(+). Its pathway is pyrimidine metabolism; UMP biosynthesis via de novo pathway; (S)-dihydroorotate from bicarbonate: step 2/3. Functionally, catalyzes the condensation of carbamoyl phosphate and aspartate to form carbamoyl aspartate and inorganic phosphate, the committed step in the de novo pyrimidine nucleotide biosynthesis pathway. This chain is Aspartate carbamoyltransferase catalytic subunit, found in Burkholderia vietnamiensis (strain G4 / LMG 22486) (Burkholderia cepacia (strain R1808)).